We begin with the raw amino-acid sequence, 574 residues long: Protein SIX6OS1 (574 aa).

The tract at residues 259–313 (KDEQVSNRSSQNSQLLLPCESQKFVRNMNSSEARVTDKKEESSANQSKFVRSDVR) is disordered. A compositionally biased stretch (low complexity) spans 264 to 275 (SNRSSQNSQLLL). Phosphothreonine is present on threonine 427. Phosphoserine is present on serine 430. The disordered stretch occupies residues 549 to 574 (QDPSTMTSSSSKDFSSSQNKTQFMFF). Over residues 552–565 (STMTSSSSKDFSSS) the composition is skewed to low complexity.

As to quaternary structure, interacts with SYCE1. Interacts with proteasome subunit PSMA8; to participate in meiosis progression during spermatogenesis. As to expression, most abundantly expressed in testis. Also expressed in retina and skeletal muscle.

It localises to the chromosome. Its function is as follows. Meiotic protein that localizes to the central element of the synaptonemal complex and is required for chromosome synapsis during meiotic recombination. Required for the appropriate processing of intermediate recombination nodules before crossover formation. The sequence is that of Protein SIX6OS1 (Six6os1) from Mus musculus (Mouse).